The sequence spans 709 residues: Anillin-like protein 3 (709 aa).

A PH domain is found at 584–705 (DMEYRGFLHI…WLSAINDTLD (122 aa)).

This chain is Anillin-like protein 3 (ani-3), found in Caenorhabditis elegans.